Consider the following 733-residue polypeptide: Ferric aerobactin receptor (733 aa).

The first 25 residues, 1–25 (MMISKKYTLWALNPLLLTMMAPAVA), serve as a signal peptide directing secretion. The short motif at 31-38 (ETFVVSAN) is the TonB box element. Residues 43–153 (TVAEMAQTTW…TGGLINIVTK (111 aa)) enclose the TBDR plug domain. The 576-residue stretch at 158–733 (ETIMEFEAGT…TFGLNYSVLF (576 aa)) folds into the TBDR beta-barrel domain. The short motif at 716–733 (YDYKGRGRTFGLNYSVLF) is the TonB C-terminal box element.

This sequence belongs to the TonB-dependent receptor family.

Its subcellular location is the cell outer membrane. Its function is as follows. Receptor for aerobactin. The protein is Ferric aerobactin receptor (iutA) of Klebsiella pneumoniae.